The chain runs to 475 residues: Ribulose bisphosphate carboxylase large chain (475 aa).

Residues 1–2 (MS) constitute a propeptide that is removed on maturation. P3 bears the N-acetylproline mark. K14 carries the post-translational modification N6,N6,N6-trimethyllysine. Positions 123 and 173 each coordinate substrate. K175 acts as the Proton acceptor in catalysis. K177 is a substrate binding site. Positions 201, 203, and 204 each coordinate Mg(2+). Position 201 is an N6-carboxylysine (K201). H294 acts as the Proton acceptor in catalysis. R295, H327, and S379 together coordinate substrate.

Belongs to the RuBisCO large chain family. Type I subfamily. In terms of assembly, heterohexadecamer of 8 large chains and 8 small chains; disulfide-linked. The disulfide link is formed within the large subunit homodimers. The cofactor is Mg(2+). Post-translationally, the disulfide bond which can form in the large chain dimeric partners within the hexadecamer appears to be associated with oxidative stress and protein turnover.

Its subcellular location is the plastid. The protein localises to the chloroplast. It catalyses the reaction 2 (2R)-3-phosphoglycerate + 2 H(+) = D-ribulose 1,5-bisphosphate + CO2 + H2O. It carries out the reaction D-ribulose 1,5-bisphosphate + O2 = 2-phosphoglycolate + (2R)-3-phosphoglycerate + 2 H(+). Its function is as follows. RuBisCO catalyzes two reactions: the carboxylation of D-ribulose 1,5-bisphosphate, the primary event in carbon dioxide fixation, as well as the oxidative fragmentation of the pentose substrate in the photorespiration process. Both reactions occur simultaneously and in competition at the same active site. This is Ribulose bisphosphate carboxylase large chain from Picea abies (Norway spruce).